The chain runs to 205 residues: Small ribosomal subunit protein uS4 (205 aa).

Positions 18–49 (NIWGRPKSPVNKREYGPGQHGQRRKGKLSDFG) are disordered. An S4 RNA-binding domain is found at 94–157 (RRLDTVVYRA…KQLALVLEAN (64 aa)).

It belongs to the universal ribosomal protein uS4 family. As to quaternary structure, part of the 30S ribosomal subunit. Contacts protein S5. The interaction surface between S4 and S5 is involved in control of translational fidelity.

One of the primary rRNA binding proteins, it binds directly to 16S rRNA where it nucleates assembly of the body of the 30S subunit. Functionally, with S5 and S12 plays an important role in translational accuracy. This chain is Small ribosomal subunit protein uS4, found in Nitrobacter hamburgensis (strain DSM 10229 / NCIMB 13809 / X14).